Here is a 247-residue protein sequence, read N- to C-terminus: Segregation and condensation protein A (247 aa).

This sequence belongs to the ScpA family. Component of a cohesin-like complex composed of ScpA, ScpB and the Smc homodimer, in which ScpA and ScpB bind to the head domain of Smc. The presence of the three proteins is required for the association of the complex with DNA.

The protein resides in the cytoplasm. Functionally, participates in chromosomal partition during cell division. May act via the formation of a condensin-like complex containing Smc and ScpB that pull DNA away from mid-cell into both cell halves. The protein is Segregation and condensation protein A of Lactobacillus johnsonii (strain CNCM I-12250 / La1 / NCC 533).